Here is a 440-residue protein sequence, read N- to C-terminus: Tubby-like F-box protein 13 (440 aa).

An F-box domain is found at 51–106 (SCWASLPPELLRDIIERLEESEATWPSRKHVVACAGVCRTWREMCKEIVKNPELCG).

Belongs to the TUB family. As to expression, ubiquitous.

The chain is Tubby-like F-box protein 13 (TULP13) from Oryza sativa subsp. japonica (Rice).